A 754-amino-acid polypeptide reads, in one-letter code: uncharacterized protein (754 aa).

A disordered region spans residues 1–110; the sequence is MNKGQNQVVP…RNMLGSLQKT (110 aa). The segment covering 15-25 has biased composition (polar residues); the sequence is FGGQNPPQLSS. Residues 26–35 show a composition bias toward low complexity; sequence IPPIVNPVVV. Positions 36–46 are enriched in polar residues; that stretch reads QNRTSPGTPFI. Residues 49–60 are compositionally biased toward basic and acidic residues; it reads KAKEIYNRRQQE. Acidic residues predominate over residues 62–72; it reads ISSDSEEEESP. The span at 76 to 93 shows a compositional bias: basic and acidic residues; the sequence is AKSKYSRDSRDSRDTRDS.

It is found in the virion. This is an uncharacterized protein from Acanthamoeba polyphaga mimivirus (APMV).